The primary structure comprises 115 residues: Large ribosomal subunit protein bL19 (115 aa).

Belongs to the bacterial ribosomal protein bL19 family.

In terms of biological role, this protein is located at the 30S-50S ribosomal subunit interface and may play a role in the structure and function of the aminoacyl-tRNA binding site. The chain is Large ribosomal subunit protein bL19 from Akkermansia muciniphila (strain ATCC BAA-835 / DSM 22959 / JCM 33894 / BCRC 81048 / CCUG 64013 / CIP 107961 / Muc).